Here is a 560-residue protein sequence, read N- to C-terminus: MSASSITGDFQDFLKHGLPAIAPAPGSETPHSPKLEEKHREKRAGLPDRHRRPIPARSRLVMLPKVETEASGLVRSHGEQGQMPENMQVSQFKMVNYSYDEDLEELCPVCGDKVSGYHYGLLTCESCKGFFKRTVQNQKRYTCIENQNCQIDKTQRKRCPYCRFKKCIDVGMKLEAVRADRMRGGRNKFGPMYKRDRALKQQKKALIRANGLKLEAMSQVIQAMPSDLTSAIQNIHSASKGLPLSHVALPPTDYDRSPFVTSPISMTMPPHGSLHGYQPYGHFPNRAIKSEYPDPYSSSPESMMGYSYMDGYQTSSPASIPHLILELLKCEPDEPQVQAKIMAYLQQEQNNRNRQEKLSAFGLLCKMADQTLFSIVEWARSSIFFRELKVDDQMKLLQNCWSELLILDHIYRQVAHGKEGTIFLVTGEHVDYSSIISNTEVAFNNLLSLAQELVVRLRSLQFDQREFVCLKFLVLFSSDVKNLENFQLVEGVQEQVNAALLDYTLCNYPQQTEKFGQLLLRLPEIRAISKQAEDYLYYKHVNGDVPYNNLLIEMLHAKRA.

Positions 17-54 are disordered; that stretch reads GLPAIAPAPGSETPHSPKLEEKHREKRAGLPDRHRRPI. Basic and acidic residues predominate over residues 31–48; the sequence is HSPKLEEKHREKRAGLPD. Positions 104–179 form a DNA-binding region, nuclear receptor; sequence EELCPVCGDK…VGMKLEAVRA (76 aa). Zn(2+) contacts are provided by Cys107, Cys110, Cys124, Cys127, Cys143, Cys149, Cys159, and Cys162. 2 NR C4-type zinc fingers span residues 107–127 and 143–162; these read CPVC…CESC and CIEN…CPYC. A C-terminal extension (CTE) region spans residues 173-188; the sequence is KLEAVRADRMRGGRNK. Positions 189 to 208 match the FTZ-F1 box motif; the sequence is FGPMYKRDRALKQQKKALIR. A Glycyl lysine isopeptide (Lys-Gly) (interchain with G-Cter in SUMO1) cross-link involves residue Lys289. The region spanning 319–558 is the NR LBD domain; the sequence is SIPHLILELL…NLLIEMLHAK (240 aa). The a phospholipid derivative site is built by Tyr535 and Lys539. Residues 547 to 558 form an AF-2 region; that stretch reads YNNLLIEMLHAK.

The protein belongs to the nuclear hormone receptor family. NR5 subfamily. Monomer; Binds DNA as a monomer. Interacts with nuclear receptor corepressors NR0B1 and NR0B2; repressing NR5A2 nuclear receptor activity. Interacts with nuclear receptor coactivators CTNNB1, PPARGC1A and NCOA2; interaction takes place following ligand-binding and promotes target gene activation. Interacts (when sumoylated) with GPS2; interaction with GPS2 onto hepatic acute phase protein promoters prevents N-Cor corepressor complex dissociation. Interacts with HNF1A. Interacts with GRIP1. In terms of processing, sumoylated by SUMO1 at Lys-289 during the hepatic acute phase response, leading to promote interaction with GPS2 and prevent N-Cor corepressor complex dissociation.

The protein localises to the nucleus. It localises to the chromosome. Its function is as follows. Orphan nuclear receptor that binds DNA as a monomer to the 5'-TCAAGGCCA-3' sequence and controls expression of target genes: regulates key biological processes, such as early embryonic development, cholesterol and bile acid synthesis pathways, as well as liver and pancreas morphogenesis. Ligand-binding causes conformational change which causes recruitment of coactivators, promoting target gene activation. The specific ligand is unknown, but specific phospholipids, such as phosphatidylethanolamine, phosphatidylserine, dilauroyl phosphatidylcholine and diundecanoyl phosphatidylcholine can act as ligand in vitro. Acts as a pioneer transcription factor, which unwraps target DNA from histones and elicits local opening of closed chromatin. Plays a central role during preimplantation stages of embryonic development. Plays a minor role in zygotic genome activation (ZGA) by regulating a small set of two-cell stage genes. Plays a major role in morula development (2-16 cells embryos) by acting as a master regulator at the 8-cell stage, controlling expression of lineage-specifying transcription factors and genes involved in mitosis, telomere maintenance and DNA repair. Zygotic NR5A2 binds to both closed and open chromatin with other transcription factors, often at SINE B1/Alu repeats DNA elements, promoting chromatin accessibility at nearby regulatory regions. Also involved in the epiblast stage of development and embryonic stem cell pluripotency, by promoting expression of POU5F1/OCT4. Regulates other processes later in development, such as formation of connective tissue in lower jaw and middle ear, neural stem cell differentiation, ovarian follicle development and Sertoli cell differentiation. Involved in exocrine pancreas development and acinar cell differentiation. Acts as an essential transcriptional regulator of lipid metabolism. Key regulator of cholesterol 7-alpha-hydroxylase gene (CYP7A) expression in liver. Also acts as a negative regulator of inflammation in different organs, such as, liver and pancreas. Protects against intestinal inflammation via its ability to regulate glucocorticoid production. Plays an anti-inflammatory role during the hepatic acute phase response by acting as a corepressor: inhibits the hepatic acute phase response by preventing dissociation of the N-Cor corepressor complex. Acts as a regulator of immunity by promoting lymphocyte T-cell development, proliferation and effector functions. Also involved in resolution of endoplasmic reticulum stress in the liver. The polypeptide is Nuclear receptor subfamily 5 group A member 2 (Rattus norvegicus (Rat)).